The primary structure comprises 964 residues: MALRRLSKSVSSAIKAQYTLSRPSPLLRSRSLSSSPHYTSIGRPTNSFIGKINNSSITHATTTHGQLFPLSSPRRFCTTTAQVNQNEFTEMAWEGLINAFDAARESKQQIVESEHLMKALLEQKDGMARKIFTKAGIDNSSVLQATDLFISKQPTVSDASGQRLGSSLSVILENAKRHKKDMLDSYVSVEHFLLAYYSDTRFGQEFFRDMKLDIQVLKDAIKDVRGDQRVTDRNPESKYQALEKYGNDLTEMARRGKLDPVIGRDDEIRRCIQILCRRTKNNPVIIGEPGVGKTAIAEGLAQRIVRGDVPEPLMNRKLISLDMGSLLAGAKFRGDFEERLKAVMKEVSASNGQTILFIDEIHTVVGAGAMDGAMDASNLLKPMLGRGELRCIGATTLTEYRKYIEKDPALERRFQQVLCVQPSVEDTISILRGLRERYELHHGVTISDSALVSAAVLADRYITERFLPDKAIDLVDEAGAKLKMEITSKPTELDGIDRAVIKLEMEKLSLKNDTDKASKERLQKIENDLSTLKQKQKELNVQWEKEKSLMTKIRSFKEEIDRVNLEIESAEREYDLNRAAELKYGTLLSLQRQLEEAEKNLTNFRQFGQSLLREVVTDLDIAEIVSKWTGIPLSNLQQSEREKLVMLEEVLHHRVIGQDMAVKSVADAIRRSRAGLSDPNRPIASFMFMGPTGVGKTELAKALAGYLFNTENAIVRVDMSEYMEKHSVSRLVGAPPGYVGYEEGGQLTEVVRRRPYSVVLFDEIEKAHPDVFNILLQLLDDGRITDSQGRTVSFKNCVVIMTSNIGSHHILETLRNNEDSKEAVYEIMKRQVVELARQNFRPEFMNRIDEYIVFQPLDSNEISKIVELQMRRVKNSLEQKKIKLQYTKEAVDLLAQLGFDPNYGARPVKRVIQQMVENEIAVGILKGDFAEEDTVLVDVDHLASDNKLVIKKLESNASAEEMAA.

The transit peptide at 1–39 directs the protein to the mitochondrion; sequence MALRRLSKSVSSAIKAQYTLSRPSPLLRSRSLSSSPHYT. In terms of domain architecture, Clp R spans 83-227; that stretch reads VNQNEFTEMA…KDAIKDVRGD (145 aa). Repeat regions lie at residues 88–153 and 164–227; these read FTEM…ISKQ and LGSS…VRGD. The interval 242-490 is i; the sequence is LEKYGNDLTE…KLKMEITSKP (249 aa). ATP contacts are provided by residues 287–294 and 690–697; these read GEPGVGKT and GPTGVGKT. Residues 616-807 form an II region; that stretch reads VTDLDIAEIV…VVIMTSNIGS (192 aa).

Belongs to the ClpA/ClpB family.

It is found in the mitochondrion. In terms of biological role, molecular chaperone that does not seem to be involved in heat stress response or tolerance. This is Chaperone protein ClpB4, mitochondrial (CLPB4) from Arabidopsis thaliana (Mouse-ear cress).